The primary structure comprises 260 residues: Glutathione S-transferase domain-containing protein DDB_G0274223 (260 aa).

One can recognise a GST N-terminal domain in the interval 7-96 (KVDYIFYTNN…YLAQKYNTFL (90 aa)). Residues 102–233 (NPHENSDVIT…GFKTFNPSAL (132 aa)) form the GST C-terminal domain.

The protein belongs to the GST superfamily.

The sequence is that of Glutathione S-transferase domain-containing protein DDB_G0274223 from Dictyostelium discoideum (Social amoeba).